A 71-amino-acid polypeptide reads, in one-letter code: Putative antitoxin VapB15 (71 aa).

Belongs to the UPF0330 family.

In terms of biological role, possibly the antitoxin component of a type II toxin-antitoxin (TA) system. Its cognate toxin is VapC15 (Potential). The chain is Putative antitoxin VapB15 (vapB15) from Archaeoglobus fulgidus (strain ATCC 49558 / DSM 4304 / JCM 9628 / NBRC 100126 / VC-16).